Here is a 459-residue protein sequence, read N- to C-terminus: Cysteine--tRNA ligase (459 aa).

Cys28 is a binding site for Zn(2+). Positions 30–40 match the 'HIGH' region motif; it reads VTVYDLCHFGH. Cys209, His234, and Glu238 together coordinate Zn(2+). Residues 266 to 270 carry the 'KMSKS' region motif; sequence KMSKS. ATP is bound at residue Lys269.

The protein belongs to the class-I aminoacyl-tRNA synthetase family. In terms of assembly, monomer. Zn(2+) is required as a cofactor.

It is found in the cytoplasm. It catalyses the reaction tRNA(Cys) + L-cysteine + ATP = L-cysteinyl-tRNA(Cys) + AMP + diphosphate. This Glaesserella parasuis serovar 5 (strain SH0165) (Haemophilus parasuis) protein is Cysteine--tRNA ligase.